A 458-amino-acid chain; its full sequence is ATP synthase subunit beta (458 aa).

148–155 (GGAGVGKT) is an ATP binding site.

This sequence belongs to the ATPase alpha/beta chains family. F-type ATPases have 2 components, CF(1) - the catalytic core - and CF(0) - the membrane proton channel. CF(1) has five subunits: alpha(3), beta(3), gamma(1), delta(1), epsilon(1). CF(0) has three main subunits: a(1), b(2) and c(9-12). The alpha and beta chains form an alternating ring which encloses part of the gamma chain. CF(1) is attached to CF(0) by a central stalk formed by the gamma and epsilon chains, while a peripheral stalk is formed by the delta and b chains.

The protein resides in the cell inner membrane. The catalysed reaction is ATP + H2O + 4 H(+)(in) = ADP + phosphate + 5 H(+)(out). Functionally, produces ATP from ADP in the presence of a proton gradient across the membrane. The catalytic sites are hosted primarily by the beta subunits. The polypeptide is ATP synthase subunit beta (Ectopseudomonas mendocina (strain ymp) (Pseudomonas mendocina)).